A 43-amino-acid polypeptide reads, in one-letter code: Protein PsbN (43 aa).

The chain crosses the membrane as a helical span at residues 5 to 27 (TLVAISISCLLVSFTGYALYTAF).

This sequence belongs to the PsbN family.

Its subcellular location is the plastid. It localises to the chloroplast thylakoid membrane. In terms of biological role, may play a role in photosystem I and II biogenesis. The chain is Protein PsbN from Cryptomeria japonica (Japanese cedar).